We begin with the raw amino-acid sequence, 576 residues long: Septation ring formation regulator EzrA (576 aa).

At 1–7 (MSSTVII) the chain is on the extracellular side. The chain crosses the membrane as a helical span at residues 8–26 (LIVVLLVILVAFYAFAILM). Residues 27–576 (RKKTEDRILA…FKNKPTPDYL (550 aa)) lie on the Cytoplasmic side of the membrane. 2 coiled-coil regions span residues 105-134 (RARESVADSEAQIELMEGDVEGIRQGVAQL) and 277-301 (EQFELDRVEAELGLIQEKVEELYAI).

It belongs to the EzrA family.

It localises to the cell membrane. In terms of biological role, negative regulator of FtsZ ring formation; modulates the frequency and position of FtsZ ring formation. Inhibits FtsZ ring formation at polar sites. Interacts either with FtsZ or with one of its binding partners to promote depolymerization. This Lactococcus lactis subsp. lactis (strain IL1403) (Streptococcus lactis) protein is Septation ring formation regulator EzrA.